Here is a 419-residue protein sequence, read N- to C-terminus: Protein distal antenna-related (419 aa).

Positions 15-66 (TRGKRPLRNLTPNDKVRAIQRIHNGETKASVSRDIGVPESTLRGWCKNEQKL) constitute an HTH psq-type domain. Positions 42-62 (KASVSRDIGVPESTLRGWCKN) form a DNA-binding region, H-T-H motif. Disordered stretches follow at residues 333-359 (QPGGGGPGGPSYNPNQMASGGSEPDLE) and 378-419 (EASN…DAEQ).

As to quaternary structure, interacts with itself, dan, ey and dac to form a complex (or complexes) containing the RD factors. In terms of tissue distribution, coexpressed with dan in the presumptive distal antenna, but not in the leg imaginal disk. Both proteins are also expressed in the brain and the eye region of the eye-antenna disk. First detected in early L3 eye disks in cells surrounding the newly initiated morphogenetic furrow. Highly expressed in evenly spaced clusters of cells anterior to the furrow, lower levels within and posterior to the furrow.

The protein resides in the nucleus. Probable transcription factor with a role in the retinal determination (RD) network. Regulates ato expression and is required for normal R8 induction and differentiation. Danr appears to repress Dan expression, but Dan is required for Danr expression anterior to the morphogenetic furrow (MF). Dan and Danr lie downstream of so and require dac function for highest levels of expression. Contributes to differentiation of antenna-specific characteristics; effector gene that acts downstream of homothorax (hth), Distal-less (Dll), cut (ct) and spineless (ss) genes to control differentiation of distal antennal structures. In Drosophila melanogaster (Fruit fly), this protein is Protein distal antenna-related.